The chain runs to 249 residues: tRNA (guanine-N(1)-)-methyltransferase (249 aa).

S-adenosyl-L-methionine contacts are provided by residues Gly113 and 133-138 (IGDFVV).

This sequence belongs to the RNA methyltransferase TrmD family. In terms of assembly, homodimer.

It localises to the cytoplasm. The catalysed reaction is guanosine(37) in tRNA + S-adenosyl-L-methionine = N(1)-methylguanosine(37) in tRNA + S-adenosyl-L-homocysteine + H(+). Functionally, specifically methylates guanosine-37 in various tRNAs. This chain is tRNA (guanine-N(1)-)-methyltransferase, found in Neisseria gonorrhoeae (strain ATCC 700825 / FA 1090).